The sequence spans 455 residues: MYKHPWLPNLDLIDEMLKEIGVNSLDELFNDIPAEIKINRLLNVAKGKPLSEYEIEKEINEKVKKNVELQAPPFIGAGICPHYIPNVVKFIIGRSEFYTSYTPYQPEISQGLLQALFEYQSLMAELLDMDVVNASMYDWGSALAEAVLMANRINGKKTVLVPENANPFHKEVVRTWIGGKGIKIEEVKYDKNSGELDLEDLEKKSNIDDISAIYIQQPNFFGIFESNIEHVIDVAKHKRALSIVGVNPLSLGLIKPPGSYEADIVVGDGQELGLPLNFGGPLMGVFAVRWDMSLVRQMPGRIVGITKDTNGKMGFTLILQTREQFIKREKATSNITTNEALLAIANAVYLSLLGKEGMRELTEEIYFRSHYAAKKLTEIDNVSMPFRSDFFEEFAIRFPIEYDKISNKLKERKLQGGLKLSDYTSLFCVTEVHDKKSIDLLVSTIQEMINGVETS.

It belongs to the GcvP family. N-terminal subunit subfamily. In terms of assembly, the glycine cleavage system is composed of four proteins: P, T, L and H. In this organism, the P 'protein' is a heterodimer of two subunits.

The enzyme catalyses N(6)-[(R)-lipoyl]-L-lysyl-[glycine-cleavage complex H protein] + glycine + H(+) = N(6)-[(R)-S(8)-aminomethyldihydrolipoyl]-L-lysyl-[glycine-cleavage complex H protein] + CO2. Functionally, the glycine cleavage system catalyzes the degradation of glycine. The P protein binds the alpha-amino group of glycine through its pyridoxal phosphate cofactor; CO(2) is released and the remaining methylamine moiety is then transferred to the lipoamide cofactor of the H protein. In Saccharolobus islandicus (strain Y.G.57.14 / Yellowstone #1) (Sulfolobus islandicus), this protein is Probable glycine dehydrogenase (decarboxylating) subunit 1.